The chain runs to 190 residues: Spermatogenesis-associated protein 12 (190 aa).

In terms of tissue distribution, expressed in testis.

The sequence is that of Spermatogenesis-associated protein 12 (SPATA12) from Homo sapiens (Human).